The following is a 122-amino-acid chain: Large ribosomal subunit protein uL14 (122 aa).

The protein belongs to the universal ribosomal protein uL14 family. As to quaternary structure, part of the 50S ribosomal subunit. Forms a cluster with proteins L3 and L19. In the 70S ribosome, L14 and L19 interact and together make contacts with the 16S rRNA in bridges B5 and B8.

Binds to 23S rRNA. Forms part of two intersubunit bridges in the 70S ribosome. The protein is Large ribosomal subunit protein uL14 of Thermosipho melanesiensis (strain DSM 12029 / CIP 104789 / BI429).